A 519-amino-acid chain; its full sequence is 4-nitrophenol 2-monooxygenase, oxygenase component (519 aa).

This sequence belongs to the FADH(2)-utilizing monooxygenase family. As to quaternary structure, homotetramer. 4-nitrophenol 2-monooxygenase complex consists of an oxygenase component NphA1 and a flavin reductase component NphA2. The cofactor is FAD.

It carries out the reaction 4-nitrophenol + NADH + O2 + H(+) = 4-nitrocatechol + NAD(+) + H2O. With respect to regulation, partially inhibited by concentrations of FAD above 10 uM and completely inhibited by concentrations above 50 uM. Functionally, utilizes the flavins supplied by NphA2 to catalyze the degradation of 4-nitrophenol (4-NP) via 4-nitrocatechol (4-NC) which is used as the sole carbon, nitrogen, and energy source. Can also degrade phenol and 4-chlorophenol as rapidly as 4-NP. This Rhodococcus sp protein is 4-nitrophenol 2-monooxygenase, oxygenase component (nphA1).